We begin with the raw amino-acid sequence, 467 residues long: Septin-10 (467 aa).

The region spanning 63 to 329 (QGFCFNILCV…ELYRRCKLEE (267 aa)) is the Septin-type G domain. Residues 73–80 (GETGIGKS) form a G1 motif region. GTP contacts are provided by residues 73–80 (GETGIGKS), glycine 128, 209–217 (KADTVSKTE), glycine 263, and arginine 278. The tract at residues 125 to 128 (NTVG) is G3 motif. The G4 motif stretch occupies residues 208–211 (AKAD).

Belongs to the TRAFAC class TrmE-Era-EngA-EngB-Septin-like GTPase superfamily. Septin GTPase family. In terms of assembly, septins polymerize into heterooligomeric protein complexes that form filaments, and can associate with cellular membranes, actin filaments and microtubules. GTPase activity is required for filament formation. Interacts with ADGB. In terms of processing, proteolytically cleaved in vitro in a calmodulin-dependent manner.

Its subcellular location is the cytoplasm. The protein localises to the cytoskeleton. It is found in the cell projection. The protein resides in the cilium. It localises to the flagellum. In terms of biological role, filament-forming cytoskeletal GTPase. May play a role in cytokinesis (Potential). This chain is Septin-10, found in Pongo abelii (Sumatran orangutan).